Consider the following 299-residue polypeptide: Mitochondrial 2-oxodicarboxylate carrier (299 aa).

3 Solcar repeats span residues 11–100 (NEAS…YKKL), 107–196 (SPAL…VKNI), and 205–294 (LEFL…TYSW). 6 helical membrane passes run 17–37 (ILAG…LDVV), 62–82 (MIFR…PILA), 100–120 (LLGY…LGSG), 179–199 (HGVF…IIPV), 211–231 (FGIG…FDVA), and 274–290 (IMRL…VYEY).

It belongs to the mitochondrial carrier (TC 2.A.29) family.

The protein localises to the mitochondrion inner membrane. It catalyses the reaction 2-oxoadipate(in) + 2-oxoglutarate(out) = 2-oxoadipate(out) + 2-oxoglutarate(in). It carries out the reaction hexanedioate(in) + 2-oxoglutarate(out) = hexanedioate(out) + 2-oxoglutarate(in). The enzyme catalyses L-2-aminoadipate(in) + 2-oxoglutarate(out) = L-2-aminoadipate(out) + 2-oxoglutarate(in). The catalysed reaction is glutarate(in) + 2-oxoglutarate(out) = glutarate(out) + 2-oxoglutarate(in). It catalyses the reaction 2-oxoheptanedioate(in) + 2-oxoglutarate(out) = 2-oxoheptanedioate(out) + 2-oxoglutarate(in). It carries out the reaction heptanedioate(in) + 2-oxoglutarate(out) = heptanedioate(out) + 2-oxoglutarate(in). The enzyme catalyses citrate(in) + 2-oxoglutarate(out) = citrate(out) + 2-oxoglutarate(in). Its function is as follows. Transports dicarboxylates across the inner membranes of mitochondria by a counter-exchange mechanism. Can transport 2-oxoadipate (2-oxohexanedioate), 2-oxoglutarate, adipate (hexanedioate), glutarate, and to a lesser extent, pimelate (heptanedioate), 2-oxopimelate (2-oxoheptanedioate), 2-aminoadipate (2-aminohexanedioate), oxaloacetate, and citrate. Plays a central role in catabolism of lysine, hydroxylysine, and tryptophan, by transporting common metabolite intermediates (such as 2-oxoadipate) into the mitochondria, where it is converted into acetyl-CoA and can enter the citric acid (TCA) cycle. The chain is Mitochondrial 2-oxodicarboxylate carrier (SLC25A21) from Bos taurus (Bovine).